The primary structure comprises 156 residues: MSTAMNKFTQTISKPATILNISDSEESGDEAGVGKVSRTTQSSERWLDLLIEKFQPSLQNITRYINWNFIRICNDRLKKEKMGYIEAKQYVEDMAWMVIASEADSIEWKCIRRQEKVTGVKYPKFFFVQHKEDWIECTGCIPYPGHDLIYDEDDDD.

It belongs to the pneumovirus non-structural protein 2 family.

It is found in the host cytoplasm. Its function is as follows. Plays a major role in antagonizing the type I IFN-mediated antiviral response. May also inhibit viral transcription and RNA replication. This chain is Non-structural protein 2 (1B), found in Mus musculus (Mouse).